The sequence spans 466 residues: 3-isopropylmalate dehydratase large subunit (466 aa).

Residues Cys-347, Cys-407, and Cys-410 each coordinate [4Fe-4S] cluster.

The protein belongs to the aconitase/IPM isomerase family. LeuC type 1 subfamily. In terms of assembly, heterodimer of LeuC and LeuD. [4Fe-4S] cluster is required as a cofactor.

It catalyses the reaction (2R,3S)-3-isopropylmalate = (2S)-2-isopropylmalate. Its pathway is amino-acid biosynthesis; L-leucine biosynthesis; L-leucine from 3-methyl-2-oxobutanoate: step 2/4. Catalyzes the isomerization between 2-isopropylmalate and 3-isopropylmalate, via the formation of 2-isopropylmaleate. In Acidiphilium cryptum (strain JF-5), this protein is 3-isopropylmalate dehydratase large subunit.